We begin with the raw amino-acid sequence, 402 residues long: Putative cytochrome P450 123 (402 aa).

Cys350 contacts heme.

The protein belongs to the cytochrome P450 family. Requires heme as cofactor.

This is Putative cytochrome P450 123 (cyp123) from Mycobacterium bovis (strain ATCC BAA-935 / AF2122/97).